Consider the following 184-residue polypeptide: Large ribosomal subunit protein bL9 (184 aa).

A disordered region spans residues 160–184; the sequence is LQNQKSEQQEAEQDANKEAADGDDS. Positions 173–184 are enriched in basic and acidic residues; it reads DANKEAADGDDS.

This sequence belongs to the bacterial ribosomal protein bL9 family.

In terms of biological role, binds to the 23S rRNA. The chain is Large ribosomal subunit protein bL9 from Wolbachia sp. subsp. Drosophila simulans (strain wRi).